Reading from the N-terminus, the 363-residue chain is GDP-fucose transporter (363 aa).

8 helical membrane-spanning segments follow: residues 30–47 (VITA…LVFL), 62–79 (FITW…LFLS), 126–148 (VSFY…YLIL), 152–171 (TSGQ…LLGV), 180–202 (LSYT…AIYT), 222–244 (LNAL…VFYF), 251–273 (TFWI…TGWQ), and 307–326 (LLWW…YTYV). A disordered region spans residues 334 to 363 (KNSGASPASEAKSDKVKLLGRDGNAAEESV). Basic and acidic residues predominate over residues 344–353 (AKSDKVKLLG).

This sequence belongs to the TPT transporter family. SLC35C subfamily.

Its subcellular location is the golgi apparatus membrane. In terms of biological role, involved in GDP-fucose import from the cytoplasm into the Golgi lumen. The sequence is that of GDP-fucose transporter from Caenorhabditis elegans.